The following is a 177-amino-acid chain: Large ribosomal subunit protein uL10 (177 aa).

It belongs to the universal ribosomal protein uL10 family. Part of the ribosomal stalk of the 50S ribosomal subunit. The N-terminus interacts with L11 and the large rRNA to form the base of the stalk. The C-terminus forms an elongated spine to which L12 dimers bind in a sequential fashion forming a multimeric L10(L12)X complex.

Forms part of the ribosomal stalk, playing a central role in the interaction of the ribosome with GTP-bound translation factors. This Legionella pneumophila (strain Paris) protein is Large ribosomal subunit protein uL10.